Consider the following 378-residue polypeptide: Homoserine O-acetyltransferase (378 aa).

The 286-residue stretch at 52–337 (NAILICHALT…YSQHGHDTFL (286 aa)) folds into the AB hydrolase-1 domain. S148 functions as the Nucleophile in the catalytic mechanism. R217 lines the substrate pocket. Catalysis depends on residues D304 and H333. Residue D334 coordinates substrate.

This sequence belongs to the AB hydrolase superfamily. MetX family. As to quaternary structure, homodimer.

The protein resides in the cytoplasm. It carries out the reaction L-homoserine + acetyl-CoA = O-acetyl-L-homoserine + CoA. Its pathway is amino-acid biosynthesis; L-methionine biosynthesis via de novo pathway; O-acetyl-L-homoserine from L-homoserine: step 1/1. In terms of biological role, transfers an acetyl group from acetyl-CoA to L-homoserine, forming acetyl-L-homoserine. The polypeptide is Homoserine O-acetyltransferase (Chloroherpeton thalassium (strain ATCC 35110 / GB-78)).